Consider the following 181-residue polypeptide: UPF0228 protein MA_3117 (181 aa).

Belongs to the UPF0228 family.

The chain is UPF0228 protein MA_3117 from Methanosarcina acetivorans (strain ATCC 35395 / DSM 2834 / JCM 12185 / C2A).